Consider the following 313-residue polypeptide: Beta-lactamase BRO-1 (313 aa).

The N-terminal stretch at 1 to 25 is a signal peptide; sequence MQRRHFLQKTLLALPIIFSGNLLTG. C26 is lipidated: N-palmitoyl cysteine. A lipid anchor (S-diacylglycerol cysteine) is attached at C26. S90 serves as the catalytic Acyl-ester intermediate. 255–257 is a substrate binding site; that stretch reads KTG.

The protein belongs to the class-A beta-lactamase family.

It localises to the cell membrane. It catalyses the reaction a beta-lactam + H2O = a substituted beta-amino acid. This Moraxella catarrhalis (Branhamella catarrhalis) protein is Beta-lactamase BRO-1 (bla).